The chain runs to 63 residues: Large ribosomal subunit protein bL28 (63 aa).

This sequence belongs to the bacterial ribosomal protein bL28 family.

This is Large ribosomal subunit protein bL28 from Desulfatibacillum aliphaticivorans.